Consider the following 475-residue polypeptide: 3-isopropylmalate dehydratase large subunit (475 aa).

Residues Cys-352, Cys-412, and Cys-415 each contribute to the [4Fe-4S] cluster site.

The protein belongs to the aconitase/IPM isomerase family. LeuC type 1 subfamily. Heterodimer of LeuC and LeuD. Requires [4Fe-4S] cluster as cofactor.

It catalyses the reaction (2R,3S)-3-isopropylmalate = (2S)-2-isopropylmalate. It participates in amino-acid biosynthesis; L-leucine biosynthesis; L-leucine from 3-methyl-2-oxobutanoate: step 2/4. Functionally, catalyzes the isomerization between 2-isopropylmalate and 3-isopropylmalate, via the formation of 2-isopropylmaleate. The chain is 3-isopropylmalate dehydratase large subunit from Gluconobacter oxydans (strain 621H) (Gluconobacter suboxydans).